Consider the following 127-residue polypeptide: MLFSGKYQLESQENFEAFRKAIGLPDELIQKGKDIKSISEIEENGDDFKVTITTGSKVIVNTFTVGKEAELETLTGEKAKGVVHRDGNKLKVSLKGIESVTELVDGNTIANTMTLGNIGYKRISKRV.

Belongs to the calycin superfamily. Fatty-acid binding protein (FABP) family.

Its subcellular location is the cytoplasm. The sequence is that of Fatty acid-binding protein, liver-type (fabp1) from Epinephelus coioides (Orange-spotted grouper).